A 1132-amino-acid chain; its full sequence is MIPVQVGKKIRYSYAKFPEILELPYLIEIQKKSYQWFLDEGLREVFREISPITDFTGNLSLEFLDYYLGKPKYSVEECKERDFTYSAPLRVKVRLLNKETGEIKEQEVFLGDFPLMTEKGTFIFNGAERVVISQMVRSPGVYFSEQVDPNGKKMYLATIIPNRGAWLEFETDVNDHIYVRIDRTRKLPVTVLLKALGYESKGRIAELFDHDDKIIATLERDNTDSREEALIEIYKKLRPGEPPTVESAKTLLDSMFFDPKRYDLGNVGRYKLFKKLNHGVLYRYLEEDGEKEYDKYLNDYVPVKREFIRELTNEDIIYTIRYLLGLMRGQGKVDDIDHLGNRRLRSVGELLQNQFRIGLARMERVVRERMTIQDADSLTPQVLINTRPIVAAIKEFFGSSQLSQFMDQTNPLAELTHKRRLSALGPGGLSRERAGFEVRDVHHSHYGRMCPIETPEGPNIGLIGNLTTYARVNEFGFIETPYRKVDKERGVVTNEIVYLTADEEEKYIIAQANVRLSPEGKFLDEMVNARHGSEILHVEPSKVDFVDVSPKQVFSVATSLIPFLEHDDANRALMGANMQRQAVPLIRTEAPVVGTGIEYKAAKDSGVVVLAKNPGVVERVTADEIVIRNDQGQIDRYKLIKFQRSNQGTCINQKPIVRKGERVEKDQIIADGPSTDHGELALGKNVLVAYMPWEGYNYEDAILISEKLVKEDVFTSIHIEEYECDARDTKLGPEEITRDIPNVGEDALKDLDERGIIRIGAEVRPGDILVGKVTPKGETELTAEERLLRAIFGEKAREVRDTSLRVPHGESGKVVDVKVFSRENGDELSPGVNMLVRVYIAQKRKISVGDKMAGRHGNKGVVARILPEEDMPFLPDGTPVEIVLNPLGVPSRMNIGQILECHLGWAAKALGINVATPIFNGATEEDIFEALRKAGLPEDGKIEVRDGRTGEPFDSRVTVGYVYMLKLAHLVDDKIHARSTGPYSLVTQQPLGGKAQFGGQRFGEMEVWALEAYGAAYTLQEILTIKSDDVVGRVKTYEAIVKGENIPEPGVPESFKVLIKELQSLGLDVKVLTDNDEEVEIKEIDDDIGEKAEEYGLAASIADRDEVKNEYYEEEVEADFEINDDFDGDLED.

It belongs to the RNA polymerase beta chain family. As to quaternary structure, the RNAP catalytic core consists of 2 alpha, 1 beta, 1 beta' and 1 omega subunit. When a sigma factor is associated with the core the holoenzyme is formed, which can initiate transcription.

It catalyses the reaction RNA(n) + a ribonucleoside 5'-triphosphate = RNA(n+1) + diphosphate. DNA-dependent RNA polymerase catalyzes the transcription of DNA into RNA using the four ribonucleoside triphosphates as substrates. The chain is DNA-directed RNA polymerase subunit beta from Carboxydothermus hydrogenoformans (strain ATCC BAA-161 / DSM 6008 / Z-2901).